Consider the following 425-residue polypeptide: Podosporapepsin (425 aa).

The first 28 residues, 1–28, serve as a signal peptide directing secretion; the sequence is MVSLTDLFLASLLVPTSPWLCLPPRIDT. The propeptide at 29–91 is activation peptide; that stretch reads IDQRGGRVTL…QEEAFARIKR (63 aa). The Peptidase A1 domain occupies 108-419; the sequence is YVTPVTIGTP…GTNPPRIGFA (312 aa). D126 is a catalytic residue. N-linked (GlcNAc...) asparagine glycans are attached at residues N184 and N273. The active site involves D310. A disulfide bond links C346 and C381. A glycan (N-linked (GlcNAc...) asparagine) is linked at N370.

The protein belongs to the peptidase A1 family.

The polypeptide is Podosporapepsin (PAPA) (Podospora anserina (Pleurage anserina)).